The chain runs to 92 residues: Small ribosomal subunit protein uS19 (92 aa).

Belongs to the universal ribosomal protein uS19 family.

Functionally, protein S19 forms a complex with S13 that binds strongly to the 16S ribosomal RNA. This Tolumonas auensis (strain DSM 9187 / NBRC 110442 / TA 4) protein is Small ribosomal subunit protein uS19.